A 35-amino-acid polypeptide reads, in one-letter code: uncharacterized protein (35 aa).

Residues 14–34 (VVVLLAICGAMLLLRWAAMIW) traverse the membrane as a helical segment.

Its subcellular location is the membrane. This is an uncharacterized protein from Escherichia coli (strain K12).